Here is a 381-residue protein sequence, read N- to C-terminus: MSLNMFWFLPTHGDGHYLGTEEGSRPIDHGYLQQIAQAADRLGYTGVLIPTGRSCEDAWLVAASMIPVTQRLKFLVALRPSVTSPTVAARQAATLDRLSNGRALFNLVTGSDPQELAGDGVFLDHSERYEASAEFTQVWRRLLLGETVDFNGKHIHVRGAKLLFPPIQQPYPPLYFGGSSDVAQELAAEQVDLYLTWGEPPELVKEKIEHVRAKAAAHGRKIRFGVRLHVIVRETNDEAWQAAERLISRLDDETIAKAQAAFARTDSVGQQRMAALHNGKRDNLEISPNLWAGVGLVRGGAGTALVGDGPTVAARINEYAALGIDSFVLSGYPHLEEAYRVGELLFPHLDVAIPEIPQPQPLNPQGEAVANDFIPRNVAQS.

Belongs to the SsuD family. In terms of assembly, homotetramer.

It catalyses the reaction an alkanesulfonate + FMNH2 + O2 = an aldehyde + FMN + sulfite + H2O + 2 H(+). Functionally, catalyzes the desulfonation of aliphatic sulfonates. The protein is Alkanesulfonate monooxygenase of Escherichia coli O6:H1 (strain CFT073 / ATCC 700928 / UPEC).